We begin with the raw amino-acid sequence, 148 residues long: Large ribosomal subunit protein bL9 (148 aa).

This sequence belongs to the bacterial ribosomal protein bL9 family.

Binds to the 23S rRNA. In Pseudomonas fluorescens (strain Pf0-1), this protein is Large ribosomal subunit protein bL9.